The chain runs to 439 residues: Probable aspartic-type endopeptidase AFUA_3G01220 (439 aa).

An N-terminal signal peptide occupies residues 1-20; sequence MHFSIGSLFLYLIASASCTA. The disordered stretch occupies residues 31–50; that stretch reads RTPFTTSTSKPSAFTNPSTD. Positions 32 to 45 are enriched in low complexity; that stretch reads TPFTTSTSKPSAFT. The Peptidase A1 domain maps to 95-436; that stretch reads FATSINIGNQ…DVGAAEMRFA (342 aa). N-linked (GlcNAc...) asparagine glycosylation occurs at Asn-103. Residue Asp-111 is part of the active site. 7 N-linked (GlcNAc...) asparagine glycosylation sites follow: Asn-149, Asn-178, Asn-187, Asn-253, Asn-256, Asn-276, and Asn-308. Asp-323 is a catalytic residue. Residues Asn-361 and Asn-394 are each glycosylated (N-linked (GlcNAc...) asparagine).

The protein belongs to the peptidase A1 family.

Its subcellular location is the secreted. Functionally, probable aspartic-type endopeptidase which contributes to virulence. The protein is Probable aspartic-type endopeptidase AFUA_3G01220 of Aspergillus fumigatus (strain ATCC MYA-4609 / CBS 101355 / FGSC A1100 / Af293) (Neosartorya fumigata).